Here is a 205-residue protein sequence, read N- to C-terminus: Thiamine-phosphate synthase (205 aa).

4-amino-2-methyl-5-(diphosphooxymethyl)pyrimidine-binding positions include 37–41 (QVREK) and Asn-69. Residues Asp-70 and Asp-89 each coordinate Mg(2+). Ser-108 contacts 4-amino-2-methyl-5-(diphosphooxymethyl)pyrimidine. Residue 134–136 (TGS) participates in 2-[(2R,5Z)-2-carboxy-4-methylthiazol-5(2H)-ylidene]ethyl phosphate binding. Lys-137 lines the 4-amino-2-methyl-5-(diphosphooxymethyl)pyrimidine pocket. 2-[(2R,5Z)-2-carboxy-4-methylthiazol-5(2H)-ylidene]ethyl phosphate-binding positions include Gly-165 and 185 to 186 (IS).

The protein belongs to the thiamine-phosphate synthase family. Requires Mg(2+) as cofactor.

It carries out the reaction 2-[(2R,5Z)-2-carboxy-4-methylthiazol-5(2H)-ylidene]ethyl phosphate + 4-amino-2-methyl-5-(diphosphooxymethyl)pyrimidine + 2 H(+) = thiamine phosphate + CO2 + diphosphate. The enzyme catalyses 2-(2-carboxy-4-methylthiazol-5-yl)ethyl phosphate + 4-amino-2-methyl-5-(diphosphooxymethyl)pyrimidine + 2 H(+) = thiamine phosphate + CO2 + diphosphate. It catalyses the reaction 4-methyl-5-(2-phosphooxyethyl)-thiazole + 4-amino-2-methyl-5-(diphosphooxymethyl)pyrimidine + H(+) = thiamine phosphate + diphosphate. The protein operates within cofactor biosynthesis; thiamine diphosphate biosynthesis; thiamine phosphate from 4-amino-2-methyl-5-diphosphomethylpyrimidine and 4-methyl-5-(2-phosphoethyl)-thiazole: step 1/1. In terms of biological role, condenses 4-methyl-5-(beta-hydroxyethyl)thiazole monophosphate (THZ-P) and 2-methyl-4-amino-5-hydroxymethyl pyrimidine pyrophosphate (HMP-PP) to form thiamine monophosphate (TMP). The polypeptide is Thiamine-phosphate synthase (Clostridium botulinum (strain 657 / Type Ba4)).